Reading from the N-terminus, the 81-residue chain is Short neurotoxin B (81 aa).

Residues 1-21 form the signal peptide; the sequence is MKTLLLTLVVVTIVCLDLGYT. 4 cysteine pairs are disulfide-bonded: Cys24–Cys43, Cys38–Cys60, Cys62–Cys73, and Cys74–Cys79.

It belongs to the three-finger toxin family. Short-chain subfamily. Type I alpha-neurotoxin sub-subfamily. Expressed by the venom gland.

The protein localises to the secreted. Its function is as follows. Binds to muscle nicotinic acetylcholine receptor (nAChR) and inhibit acetylcholine from binding to the receptor, thereby impairing neuromuscular transmission. In Aipysurus laevis (Olive sea snake), this protein is Short neurotoxin B.